The sequence spans 390 residues: Acid protease (390 aa).

An N-terminal signal peptide occupies residues 1–18; the sequence is MLFSKSLLLSVLASLSFA. Residues 75 to 386 form the Peptidase A1 domain; that stretch reads YLTTIEIGTP…DIDNSQVGIA (312 aa). Active-site residues include aspartate 93 and aspartate 282.

The protein belongs to the peptidase A1 family.

The polypeptide is Acid protease (PEP1) (Saccharomycopsis fibuligera (Yeast)).